The following is a 118-amino-acid chain: Large ribosomal subunit protein bL20 (118 aa).

It belongs to the bacterial ribosomal protein bL20 family.

In terms of biological role, binds directly to 23S ribosomal RNA and is necessary for the in vitro assembly process of the 50S ribosomal subunit. It is not involved in the protein synthesizing functions of that subunit. This chain is Large ribosomal subunit protein bL20, found in Oceanobacillus iheyensis (strain DSM 14371 / CIP 107618 / JCM 11309 / KCTC 3954 / HTE831).